Reading from the N-terminus, the 1567-residue chain is Transmembrane protein 131 homolog (1567 aa).

An N-terminal signal peptide occupies residues 1–32 (MPTQVQMRPLLRIFAEPILLILIFLFTLGAKG). Topologically, residues 33 to 1049 (EKVLQETFLG…RPGWESSLKN (1017 aa)) are lumenal. Positions 55-228 (RLVPSRLDFG…TLKPVIRISF (174 aa)) are papD-L domain. N84, N114, N168, N235, N316, N317, N342, N372, N409, N462, N563, N890, and N1013 each carry an N-linked (GlcNAc...) asparagine glycan. Residues 1050–1070 (AALVVLLASFGLVLVAAVFDA) form a helical membrane-spanning segment. At 1071–1567 (KAIMVQQNAY…SQRNNHNHMN (497 aa)) the chain is on the cytoplasmic side. The stretch at 1096-1130 (RNIVKLQAEEAAAKAESVQQQQKVKNGQLKELRKR) forms a coiled coil. Disordered regions lie at residues 1112–1337 (SVQQ…SPDA), 1364–1386 (PTDN…IGDN), and 1502–1567 (PGLE…NHMN). Low complexity-rich tracts occupy residues 1132–1150 (VVNS…SPWS) and 1166–1183 (KTVV…APAA). Phosphoserine is present on residues S1201 and S1258. A compositionally biased stretch (polar residues) spans 1247 to 1259 (AKSSPPQQENISP). Positions 1284–1298 (PGRERERERRSKDQK) are enriched in basic and acidic residues. A compositionally biased stretch (polar residues) spans 1319 to 1331 (KLNFGQTTNSTSP). Composition is skewed to polar residues over residues 1507-1519 (SARQ…QEQV) and 1536-1561 (LPTQ…SQRN).

This sequence belongs to the TMEM131 family. May interact (via PapD-L domain) with collagen proteins (via C-terminus); the interaction is direct and is involved in assembly and TRAPPIII ER-to-Golgi transport complex-dependent secretion of collagen.

The protein localises to the membrane. In terms of biological role, collagen binding transmembrane protein involved in collagen secretion, probably by recruiting the ER-to-Golgi transport complex TRAPPIII. The sequence is that of Transmembrane protein 131 homolog from Drosophila melanogaster (Fruit fly).